Here is a 764-residue protein sequence, read N- to C-terminus: Protein translocase subunit SecA 2 (764 aa).

Residues Gln83, Gly101–Thr105, and Asp490 each bind ATP.

This sequence belongs to the SecA family. In terms of assembly, monomer and homodimer. Part of the essential Sec protein translocation apparatus which comprises SecA, SecYEG and auxiliary proteins SecDF. Other proteins may also be involved.

The protein resides in the cell membrane. The protein localises to the cytoplasm. The enzyme catalyses ATP + H2O + cellular proteinSide 1 = ADP + phosphate + cellular proteinSide 2.. Part of the Sec protein translocase complex. Interacts with the SecYEG preprotein conducting channel. Has a central role in coupling the hydrolysis of ATP to the transfer of proteins into and across the cell membrane, serving as an ATP-driven molecular motor driving the stepwise translocation of polypeptide chains across the membrane. This is Protein translocase subunit SecA 2 from Corynebacterium diphtheriae (strain ATCC 700971 / NCTC 13129 / Biotype gravis).